A 382-amino-acid polypeptide reads, in one-letter code: Leucoanthocyanidin reductase (382 aa).

NADP(+) contacts are provided by residues 19-25 (GGTGFIG), Arg44, and Lys52. Residue Lys142 is the Proton acceptor of the active site. Arg146 is an NADP(+) binding site.

Belongs to the NmrA-type oxidoreductase family. Isoflavone reductase subfamily. In terms of assembly, monomer.

The catalysed reaction is (2R,3S)-catechin + NADP(+) + H2O = (2R,3S,4S)-leucocyanidin + NADPH + H(+). It participates in flavonoid metabolism; proanthocyanidin biosynthesis. Catalyzes the synthesis of catechin from 3,4-cis-leucocyanidin. Also synthesizes afzelechin and gallocatechin. The chain is Leucoanthocyanidin reductase (LAR) from Desmodium uncinatum (Silverleaf Spanish clover).